We begin with the raw amino-acid sequence, 700 residues long: Calpain-2 catalytic subunit (700 aa).

A propeptide spans 2–19 (AGMAAALAKERAAAAGAG) (anchors to the small subunit). The Calpain catalytic domain occupies 45 to 344 (LFHDPSFPAG…YSRLEICNLT (300 aa)). Ca(2+) is bound by residues Gly-91 and Asp-96. The active site involves Cys-105. Positions 175, 229, and 230 each coordinate Ca(2+). Residues His-262 and Asn-286 contribute to the active site. 3 residues coordinate Ca(2+): Glu-292, Asp-299, and Glu-323. Positions 345–514 (PDTLASDRYK…KNANSTVIDD (170 aa)) are domain III. A linker region spans residues 515–529 (EIEANFEETEIDEDD). Residues 530-700 (IEPSFKKLFG…LINWLFFTVI (171 aa)) are domain IV. Ala-542, Asp-545, Glu-547, Glu-552, Asp-585, Asp-587, Ser-589, Lys-591, Glu-596, Asp-615, Asp-617, Ser-619, Thr-621, Glu-626, Asp-658, and Asn-661 together coordinate Ca(2+). EF-hand domains lie at 572 to 605 (FSIE…TKIQ) and 602 to 637 (TKIQ…AGFK). One can recognise an EF-hand 3 domain in the interval 667–700 (IRLETLYKMFRKLDTEKTGTIELNLINWLFFTVI).

It belongs to the peptidase C2 family. Forms a heterodimer with a small (regulatory) subunit (CAPNS1). Requires Ca(2+) as cofactor. In terms of tissue distribution, ubiquitous.

It localises to the cytoplasm. It is found in the cell membrane. The enzyme catalyses Broad endopeptidase specificity.. Its activity is regulated as follows. Activated by 200-1000 micromolar concentrations of calcium and inhibited by calpastatin. Its function is as follows. Calcium-regulated non-lysosomal thiol-protease which catalyze limited proteolysis of substrates involved in cytoskeletal remodeling and signal transduction. This Gallus gallus (Chicken) protein is Calpain-2 catalytic subunit (CAPN2).